We begin with the raw amino-acid sequence, 115 residues long: Ribonuclease P protein component (115 aa).

This sequence belongs to the RnpA family. In terms of assembly, consists of a catalytic RNA component (M1 or rnpB) and a protein subunit.

The catalysed reaction is Endonucleolytic cleavage of RNA, removing 5'-extranucleotides from tRNA precursor.. In terms of biological role, RNaseP catalyzes the removal of the 5'-leader sequence from pre-tRNA to produce the mature 5'-terminus. It can also cleave other RNA substrates such as 4.5S RNA. The protein component plays an auxiliary but essential role in vivo by binding to the 5'-leader sequence and broadening the substrate specificity of the ribozyme. This chain is Ribonuclease P protein component, found in Buchnera aphidicola subsp. Acyrthosiphon pisum (strain APS) (Acyrthosiphon pisum symbiotic bacterium).